The chain runs to 161 residues: Phosphopantetheine adenylyltransferase (161 aa).

Ser9 contacts substrate. Residues Ser9–Phe10 and His17 contribute to the ATP site. Residues Lys41, Thr73, and Arg87 each coordinate substrate. ATP-binding positions include Gly88 to Arg90, Glu98, and Phe123 to Thr129.

It belongs to the bacterial CoaD family. In terms of assembly, homohexamer. Mg(2+) serves as cofactor.

Its subcellular location is the cytoplasm. It carries out the reaction (R)-4'-phosphopantetheine + ATP + H(+) = 3'-dephospho-CoA + diphosphate. It functions in the pathway cofactor biosynthesis; coenzyme A biosynthesis; CoA from (R)-pantothenate: step 4/5. Reversibly transfers an adenylyl group from ATP to 4'-phosphopantetheine, yielding dephospho-CoA (dPCoA) and pyrophosphate. This chain is Phosphopantetheine adenylyltransferase, found in Chloroflexus aggregans (strain MD-66 / DSM 9485).